Consider the following 385-residue polypeptide: S-type anion channel SLAH1 (385 aa).

The Cytoplasmic segment spans residues 1 to 42 (MEIPRQEIHIEIDNSIPSSKEFKTGLADAKPVVLMSALRSLH). A helical membrane pass occupies residues 43-65 (AGYFRISLSLCSQALLWKIMIAP). The Extracellular portion of the chain corresponds to 66–81 (ESPSMSHMHSKLPSMA). The helical transmembrane segment at 82–102 (FHLLWYLALVTQVSLCFLYAL) threads the bilayer. Residues 103–114 (KCIFFFDKVKEE) lie on the Cytoplasmic side of the membrane. The helical transmembrane segment at 115–135 (FLHYIGVNYLYAPSISWLLML) threads the bilayer. At 136–150 (QSAPMMEPNSVLYQT) the chain is on the extracellular side. The chain crosses the membrane as a helical span at residues 151–171 (LFWIFAVPVLTLDIKLYGQWF). Topologically, residues 172-176 (TTEKR) are cytoplasmic. Residues 177–197 (FLSMLANPASQVSVIANLVAA) form a helical membrane-spanning segment. The Extracellular portion of the chain corresponds to 198 to 207 (RGAAEMGWNE). A helical membrane pass occupies residues 208–228 (CALCMFSLGMVHYLVIFVTLY). Residues 229-243 (QRLPGGNNFPAKLRP) lie on the Cytoplasmic side of the membrane. The helical transmembrane segment at 244–264 (IFFLFVAAPAMASLAWNSICG) threads the bilayer. Position 265 (threonine 265) is a topological domain, extracellular. The helical transmembrane segment at 266–286 (FDAVAKMLFFLSLFIFMSLVC) threads the bilayer. The Cytoplasmic portion of the chain corresponds to 287-299 (RPNLFKKSMKRFN). The helical transmembrane segment at 300-320 (VAWWAYSFPLTFLALDSVQYA) threads the bilayer. Over 321–330 (QEVKDPVGSG) the chain is Extracellular. Residues 331–351 (LMLIFSSISVLIFLGMMVLTA) form a helical membrane-spanning segment. The Cytoplasmic segment spans residues 352 to 385 (ANSNRLLRHDPVLGSATDPKDKQKTLSLNATNQN). The interval 366–385 (SATDPKDKQKTLSLNATNQN) is disordered. Positions 376 to 385 (TLSLNATNQN) are enriched in polar residues.

The protein belongs to the SLAC1 S-type anion channel family. Homotrimer. In terms of tissue distribution, expressed in the vascular systems of root.

The protein localises to the cell membrane. In terms of biological role, slow, weak voltage-dependent S-type anion efflux channel involved in maintenance of anion homeostasis. The chain is S-type anion channel SLAH1 (SLAH1) from Arabidopsis thaliana (Mouse-ear cress).